Here is a 147-residue protein sequence, read N- to C-terminus: MRTYSPKPGEIERQWHVIDASDVVLGRLATHAATLLRGKHKPTFAPHVDTGDFVVIVNAGKVALTGNKRQQKIAYRHSGYPGGLKQLGYDELLTKRPERAIELAVKGMLPHNKLGRKLIKKLKVYAGAEHPHGAQQPVPFEIKQIAQ.

This sequence belongs to the universal ribosomal protein uL13 family. As to quaternary structure, part of the 50S ribosomal subunit.

In terms of biological role, this protein is one of the early assembly proteins of the 50S ribosomal subunit, although it is not seen to bind rRNA by itself. It is important during the early stages of 50S assembly. The sequence is that of Large ribosomal subunit protein uL13 from Salinispora arenicola (strain CNS-205).